A 439-amino-acid polypeptide reads, in one-letter code: Oocyte zinc finger protein XlCOF28 (439 aa).

C2H2-type zinc fingers lie at residues 6–28, 34–56, 62–84, 90–112, 118–140, 146–168, 174–196, 202–224, and 230–252; these read YECT…QRTH, FKCT…KKCH, YMCT…IRTH, FTCT…LRIH, HKCN…QRTH, FQCT…LRIH, YKCS…QRTH, FQCS…ERTH, and YKCS…QKTH. Disordered stretches follow at residues 246–275 and 285–304; these read KLHQ…APKT and AGLE…ESPE. 4 C2H2-type zinc fingers span residues 333 to 355, 361 to 383, 389 to 411, and 417 to 439; these read HKCT…QRTH, FKCS…RKIH, YTCA…RRTH, and YICA…QRIH.

This sequence belongs to the krueppel C2H2-type zinc-finger protein family.

Its subcellular location is the nucleus. Its function is as follows. May be involved in transcriptional regulation. This is Oocyte zinc finger protein XlCOF28 from Xenopus laevis (African clawed frog).